The primary structure comprises 122 residues: UPF0102 protein NGR_c36770 (122 aa).

Belongs to the UPF0102 family.

The chain is UPF0102 protein NGR_c36770 from Sinorhizobium fredii (strain NBRC 101917 / NGR234).